The chain runs to 298 residues: Tyrosine recombinase XerC (298 aa).

The Core-binding (CB) domain maps to 2–88; sequence TDLHTDVERY…ALRSFFDWLV (87 aa). Positions 109–288 constitute a Tyr recombinase domain; it reads HLPKNIDVDD…DFQHLASVYD (180 aa). Residues R148, K172, H240, R243, and H266 contribute to the active site. Y275 functions as the O-(3'-phospho-DNA)-tyrosine intermediate in the catalytic mechanism.

This sequence belongs to the 'phage' integrase family. XerC subfamily. As to quaternary structure, forms a cyclic heterotetrameric complex composed of two molecules of XerC and two molecules of XerD, in which XerC interacts with XerD via its C-terminal region, XerD interacts with XerC via its C-terminal region and so on.

The protein resides in the cytoplasm. FtsK may regulate the catalytic switch between XerC and XerD in the heterotetrameric complex during the two steps of the recombination process. Site-specific tyrosine recombinase, which acts by catalyzing the cutting and rejoining of the recombining DNA molecules. Binds cooperatively to specific DNA consensus sequences that are separated from XerD binding sites by a short central region, forming the heterotetrameric XerC-XerD complex that recombines DNA substrates. The complex is essential to convert dimers of the bacterial chromosome into monomers to permit their segregation at cell division. It also contributes to the segregational stability of plasmids. In the complex XerC specifically exchanges the top DNA strands. This Escherichia coli (strain 55989 / EAEC) protein is Tyrosine recombinase XerC.